The chain runs to 51 residues: Large ribosomal subunit protein bL33 (51 aa).

This sequence belongs to the bacterial ribosomal protein bL33 family.

This Acinetobacter baylyi (strain ATCC 33305 / BD413 / ADP1) protein is Large ribosomal subunit protein bL33.